Reading from the N-terminus, the 1107-residue chain is Lon protease homolog, mitochondrial (1107 aa).

The N-terminal 31 residues, 1–31 (MLSRQRIPRILASRTSLAHSIRSFTSTTSSI), are a transit peptide targeting the mitochondrion. 2 disordered regions span residues 32–152 (RPVA…PGDK) and 273–329 (PEAA…PYEP). A compositionally biased stretch (polar residues) spans 51 to 60 (TNLSSFSTYT). The segment covering 80-101 (EEERKANVEHAEAEAKEAESKQ) has biased composition (basic and acidic residues). The span at 122–141 (GAAGGSSAGSGSGADGGSGD) shows a compositional bias: gly residues. Over residues 142-152 (GGKRGRKPGDK) the composition is skewed to basic and acidic residues. Positions 166–441 (VMAIPIAKRP…KALLVLKKEH (276 aa)) constitute a Lon N-terminal domain. 594-601 (GPPGVGKT) serves as a coordination point for ATP. A disordered region spans residues 808 to 858 (PESEALTEEGKAAQEETEKKKSEEAASGETSSPKAATEASEKETTEKPRVA). Residues 815–831 (EEGKAAQEETEKKKSEE) are compositionally biased toward basic and acidic residues. The span at 832-845 (AASGETSSPKAATE) shows a compositional bias: low complexity. Residues 846–856 (ASEKETTEKPR) show a composition bias toward basic and acidic residues. The Lon proteolytic domain maps to 891-1077 (VTPPGVTMGL…SEVFDLIFPK (187 aa)). Residues S983 and K1026 contribute to the active site. Positions 1085–1107 (KSRIIEDDKSEKEESKKKNDDDE) are disordered.

It belongs to the peptidase S16 family. As to quaternary structure, homohexamer or homoheptamer. Organized in a ring with a central cavity.

The protein resides in the mitochondrion matrix. The catalysed reaction is Hydrolysis of proteins in presence of ATP.. ATP-dependent serine protease that mediates the selective degradation of misfolded, unassembled or oxidatively damaged polypeptides as well as certain short-lived regulatory proteins in the mitochondrial matrix. May also have a chaperone function in the assembly of inner membrane protein complexes. Participates in the regulation of mitochondrial gene expression and in the maintenance of the integrity of the mitochondrial genome. Binds to mitochondrial DNA in a site-specific manner. This Neurospora crassa (strain ATCC 24698 / 74-OR23-1A / CBS 708.71 / DSM 1257 / FGSC 987) protein is Lon protease homolog, mitochondrial (pim1).